Here is an 86-residue protein sequence, read N- to C-terminus: Large ribosomal subunit protein bL31B (86 aa).

The protein belongs to the bacterial ribosomal protein bL31 family. Type B subfamily. In terms of assembly, part of the 50S ribosomal subunit.

This Streptococcus agalactiae serotype III (strain NEM316) protein is Large ribosomal subunit protein bL31B.